We begin with the raw amino-acid sequence, 760 residues long: MEHTYQYLWIISFVTLPVPMLIGMGLLLFPVSTKKLHRIWAFPSVLLLSIVMVFSTDLFIQQINSSSIYQYVWSWTINNDFSLEFGHLIDPLTSILLILITTVGILVLVYSDSYMSHDQGYLRFFVYMSFFNTSMLGLVTSSNLIQIYIFWELVGMCSYLLIGFWFTRPIVSNACQKAFVTNRVGDFGLLLGILGLYWITGSFEFQDLFEIFNNLIYNNDNEVHFLFVTLCAFLLFSGAIAKSAQFPLHVWLPDAMEGPTPISALIHAATMVAAGIFLVARLLPLFVVIPYIMKLIALIGIITVLLGATLAFAQKDIKRGLAYSTMSQLGYTMLALGMGSYRAALFHLITHAYSKALLFLGSGSIIHSMEGIVGYSPDKSQNMVLMGGLTKHVPITKIAFLLGTLSLCGIPPLACFWSKDEILNDSWSYSPIFAIIAFSTAGLTAFYMFRVYLLTFEGHLNIYFQNYSGKKNSAFYSISLWGKQGSKILKKKMRLLPLLTINNKNNNERASFFCFFWKKIYQTGGTVRKMTCPFITINHFGTKRIFSYPQESDNTILFPMLVLVLFTLFIGAIGIPFNQFNKEEMNLDILSKLLIPSLSLLHQNQNESVDWYEFVTNSTFSVSIASFGIFIASSLYKPIYSSLQNLKFLNLVAKKGPKRILWDKIINVIYDWSYNRGYIDVFYTISLTEGIRRLAELTSFFDRRVIDGITNGVGFTSFFAGEGIKYVGGGRISFYLLLYLFYVLIFLLISSSIFSSFSSL.

Helical transmembrane passes span 9 to 29, 39 to 59, 89 to 109, 125 to 145, 147 to 167, 185 to 205, 221 to 241, 260 to 280, 282 to 302, 329 to 349, 356 to 376, 398 to 418, 429 to 449, 556 to 576, 620 to 640, and 734 to 754; these read WIIS…LLLF, IWAF…TDLF, IDPL…LVLV, FVYM…SNLI, IYIF…FWFT, GDFG…SFEF, NEVH…GAIA, TPIS…FLVA, LLPL…IGII, LGYT…FHLI, ALLF…VGYS, IAFL…CFWS, YSPI…FYMF, ILFP…IGIP, FSVS…KPIY, and FYLL…SSIF.

The protein belongs to the complex I subunit 5 family. NDH is composed of at least 16 different subunits, 5 of which are encoded in the nucleus.

Its subcellular location is the plastid. It localises to the chloroplast thylakoid membrane. It carries out the reaction a plastoquinone + NADH + (n+1) H(+)(in) = a plastoquinol + NAD(+) + n H(+)(out). It catalyses the reaction a plastoquinone + NADPH + (n+1) H(+)(in) = a plastoquinol + NADP(+) + n H(+)(out). Functionally, NDH shuttles electrons from NAD(P)H:plastoquinone, via FMN and iron-sulfur (Fe-S) centers, to quinones in the photosynthetic chain and possibly in a chloroplast respiratory chain. The immediate electron acceptor for the enzyme in this species is believed to be plastoquinone. Couples the redox reaction to proton translocation, and thus conserves the redox energy in a proton gradient. The polypeptide is NAD(P)H-quinone oxidoreductase subunit 5, chloroplastic (ndhF) (Populus alba (White poplar)).